The following is a 2032-amino-acid chain: Cytoskeleton-associated protein 5 (2032 aa).

TOG stretches follow at residues 1–223 (MGDD…KLPT) and 268–502 (YELL…LIHG). Position 48 is an N6-acetyllysine (K48). 3 HEAT repeats span residues 159–197 (IILLKPIIKVLPKLFESREKAVRDEAKLIAVEIYRWIRD), 356–394 (GQYAGHVVPTILEKFKEKKPQVVQALQEAIDAIFLTTTL), and 434–472 (KSLLKPFCAALLKHINDSAPEVRDAAFEALGTALKVVGE). The disordered stretch occupies residues 516-579 (PLPGRTAASG…GTKNKKGLET (64 aa)). Residues 543 to 554 (LKKAPAAKAGGP) show a composition bias toward low complexity. Residues 588 to 817 (SIEVCEEKAS…EFEKMQGQSP (230 aa)) form a TOG 3 region. One copy of the HEAT 4 repeat lies at 750 to 788 (GLNVKAFISNVKTALAATNPAVRTAAITLLGVMYLYVGP). Residues 811–851 (KMQGQSPPAPTRGISKHSTSGTDEGEDGDEPDDGSNDVVDL) form a disordered region. S816 and S845 each carry phosphoserine. The span at 833 to 845 (DEGEDGDEPDDGS) shows a compositional bias: acidic residues. TOG stretches follow at residues 853 to 1081 (PRTE…VNMP) and 1193 to 1428 (IEQL…KRPS). HEAT repeat units follow at residues 855–893 (TEISDKITSELVSKIGDKNWKIRKEGLDEVAGIINDAKF), 936–974 (KQHVKNLGIPIITVLGDSKNNVRAAALATVNAWAEQTGM), and 1013–1051 (PTDLILCVPHLYSCLEDRNGDVRKKAQDALPFFMMHLGY). Residues 1077 to 1160 (KVNMPAKPAP…KEDEDKSGPI (84 aa)) are disordered. 3 HEAT repeats span residues 1284–1322 (ENEASSFIPYLVVKVGEPKDVIRKDVRAILNRMCLVYPA), 1324–1357 (KMFPFIMEGTKSKNSKQRAECLEELGCLVESYGM), and 1361–1399 (QPTPGKALKEIAVHIGDRDNAVRNAALNTIVTVYNVHGD). Residues 1422–1443 (RSAKRPSAAPIKQVEEKPQRAQ) form a disordered region. A Phosphoserine modification is found at S1469. Residues 1801–1822 (SMDQTGSKSDKETEKGASRIDE) are disordered. Positions 1808–1822 (KSDKETEKGASRIDE) are enriched in basic and acidic residues. S1861 is subject to Phosphoserine. The interval 1932–1957 (PSVYLERLKILRQRCGLDNTKQDDRP) is interaction with TACC3. The segment at 1949–2032 (DNTKQDDRPP…RLERIKSSRK (84 aa)) is disordered. Positions 1971-1983 (VASSTDMLHSKLS) are enriched in polar residues. Positions 1984-1997 (QLRESREQHQHSDL) are enriched in basic and acidic residues. Over residues 2002–2014 (THSSGTVTSSSST) the composition is skewed to low complexity. The span at 2018 to 2032 (DDLKKRLERIKSSRK) shows a compositional bias: basic and acidic residues.

This sequence belongs to the TOG/XMAP215 family. Interacts with TACC1. Interacts with SLAIN2 and SLAIN1. Interacts with HNRNPA2B1. Interacts with TACC3 independently of clathrin. Interacts with TACC3 and clathrin forming the TACC3/ch-TOG/clathrin complex located at spindle inter-microtubules bridges. Interacts with NDC80; indicative for an association with the NDC80 complex. As to expression, overexpressed in hepatomas and colonic tumors. Also expressed in skeletal muscle, brain, heart, placenta, lung, liver, kidney and pancreas. Expression is elevated in the brain; highly expressed in the Purkinje cell bodies of the cerebellum.

It localises to the cytoplasm. The protein localises to the cytoskeleton. It is found in the microtubule organizing center. The protein resides in the centrosome. Its subcellular location is the spindle pole. It localises to the spindle. The protein localises to the chromosome. It is found in the centromere. The protein resides in the kinetochore. In terms of biological role, binds to the plus end of microtubules and regulates microtubule dynamics and microtubule organization. Acts as a processive microtubule polymerase. Promotes cytoplasmic microtubule nucleation and elongation. Plays a major role in organizing spindle poles. In spindle formation protects kinetochore microtubules from depolymerization by KIF2C and has an essential role in centrosomal microtubule assembly independently of KIF2C activity. Contributes to centrosome integrity. Acts as a component of the TACC3/ch-TOG/clathrin complex proposed to contribute to stabilization of kinetochore fibers of the mitotic spindle by acting as inter-microtubule bridge. The TACC3/ch-TOG/clathrin complex is required for the maintenance of kinetochore fiber tension. Enhances the strength of NDC80 complex-mediated kinetochore-tip microtubule attachments. This Homo sapiens (Human) protein is Cytoskeleton-associated protein 5 (CKAP5).